The primary structure comprises 648 residues: Protein kinase YegI (648 aa).

The 288-residue stretch at 15 to 302 (TTLGRELGKG…KAWVAALDSL (288 aa)) folds into the Protein kinase domain. Residues 21–29 (LGKGGEGAV) and K41 each bind ATP. Residue D143 is the Proton acceptor of the active site.

In terms of processing, autophosphorylated. Dephosphorylated by PphC.

In terms of biological role, probable serine/threonine kinase. This chain is Protein kinase YegI (yegI), found in Escherichia coli (strain K12).